A 48-amino-acid chain; its full sequence is uncharacterized protein (48 aa).

Residues 25-47 (TFASIGVTVGVQIVILLIWGLSW) form a helical membrane-spanning segment.

The protein localises to the membrane. This is an uncharacterized protein from Archaeoglobus fulgidus (strain ATCC 49558 / DSM 4304 / JCM 9628 / NBRC 100126 / VC-16).